Reading from the N-terminus, the 200-residue chain is Probable GTP-binding protein EngB (200 aa).

Positions threonine 22 to alanine 194 constitute an EngB-type G domain. Residues glycine 30–serine 37, glycine 57–leucine 61, aspartate 75–glycine 78, threonine 142–aspartate 145, and phenylalanine 173–alanine 175 each bind GTP. Mg(2+)-binding residues include serine 37 and threonine 59.

This sequence belongs to the TRAFAC class TrmE-Era-EngA-EngB-Septin-like GTPase superfamily. EngB GTPase family. Mg(2+) is required as a cofactor.

Functionally, necessary for normal cell division and for the maintenance of normal septation. The polypeptide is Probable GTP-binding protein EngB (Pelobacter propionicus (strain DSM 2379 / NBRC 103807 / OttBd1)).